The chain runs to 256 residues: uncharacterized protein (256 aa).

Residue 29–36 coordinates ATP; the sequence is GDDHSGKT.

This is an uncharacterized protein from Saccharomyces cerevisiae (strain ATCC 204508 / S288c) (Baker's yeast).